We begin with the raw amino-acid sequence, 300 residues long: Transcriptional dual regulator GltC (300 aa).

One can recognise an HTH lysR-type domain in the interval 1–58 (MELRQLRYFMEVAEREHVSEAADHLHVAQSAISRQIANLEEELNVTLFEREGRNIKLT). Residues 18 to 37 (VSEAADHLHVAQSAISRQIA) constitute a DNA-binding region (H-T-H motif).

The protein belongs to the LysR transcriptional regulatory family. In terms of assembly, interacts with gutamate dehydrogenase RocG.

Its activity is regulated as follows. Activated by alpha-ketoglutarate and inhibited by glutamate and by RocG. Its function is as follows. Positive regulator of glutamate biosynthesis (gltAB genes). Negatively regulates its own expression. The chain is Transcriptional dual regulator GltC (gltC) from Bacillus subtilis (strain 168).